Consider the following 270-residue polypeptide: Orotidine 5'-phosphate decarboxylase (270 aa).

Lysine 95 acts as the Proton donor in catalysis.

This sequence belongs to the OMP decarboxylase family. Type 2 subfamily.

The catalysed reaction is orotidine 5'-phosphate + H(+) = UMP + CO2. Its pathway is pyrimidine metabolism; UMP biosynthesis via de novo pathway; UMP from orotate: step 2/2. This chain is Orotidine 5'-phosphate decarboxylase, found in Azoarcus sp. (strain BH72).